The following is an 86-amino-acid chain: Small ribosomal subunit protein bS18 (86 aa).

Belongs to the bacterial ribosomal protein bS18 family. As to quaternary structure, part of the 30S ribosomal subunit. Forms a tight heterodimer with protein bS6.

Functionally, binds as a heterodimer with protein bS6 to the central domain of the 16S rRNA, where it helps stabilize the platform of the 30S subunit. The chain is Small ribosomal subunit protein bS18 from Heliobacterium modesticaldum (strain ATCC 51547 / Ice1).